The sequence spans 285 residues: 4-diphosphocytidyl-2-C-methyl-D-erythritol kinase (285 aa).

Lys-14 is an active-site residue. Residue 97–107 (PMGGGIGGGSS) coordinates ATP. The active site involves Asp-139.

This sequence belongs to the GHMP kinase family. IspE subfamily.

The catalysed reaction is 4-CDP-2-C-methyl-D-erythritol + ATP = 4-CDP-2-C-methyl-D-erythritol 2-phosphate + ADP + H(+). It functions in the pathway isoprenoid biosynthesis; isopentenyl diphosphate biosynthesis via DXP pathway; isopentenyl diphosphate from 1-deoxy-D-xylulose 5-phosphate: step 3/6. Its function is as follows. Catalyzes the phosphorylation of the position 2 hydroxy group of 4-diphosphocytidyl-2C-methyl-D-erythritol. The protein is 4-diphosphocytidyl-2-C-methyl-D-erythritol kinase of Tolumonas auensis (strain DSM 9187 / NBRC 110442 / TA 4).